The sequence spans 464 residues: RYamide receptor (464 aa).

The Extracellular segment spans residues 1 to 105; the sequence is MEHHNSHLLP…EDMWSSAYFK (105 aa). 3 N-linked (GlcNAc...) asparagine glycosylation sites follow: N49, N79, and N85. Residues 106–126 form a helical membrane-spanning segment; the sequence is IIVYMLYIPIFIFALIGNGTV. The Cytoplasmic portion of the chain corresponds to 127 to 148; the sequence is CYIVYSTPRMRTVTNYFIASLA. The helical transmembrane segment at 149–169 threads the bilayer; it reads IGDILMSFFCVPSSFISLFIL. The Extracellular segment spans residues 170 to 189; it reads NYWPFGLALCHFVNYSQAVS. A glycan (N-linked (GlcNAc...) asparagine) is linked at N183. A helical membrane pass occupies residues 190 to 210; that stretch reads VLVSAYTLVAISIDRYIAIMW. At 211–221 the chain is on the cytoplasmic side; it reads PLKPRITKRYA. Residues 222–242 traverse the membrane as a helical segment; sequence TFIIAGVWFIALATALPIPIV. Residues 243-274 are Extracellular-facing; sequence SGLDIPMSPWHTKCEKYICREMWPSRTQEYYY. The helical transmembrane segment at 275-295 threads the bilayer; the sequence is TLSLFALQFVVPLGVLIFTYA. Over 296 to 329 the chain is Cytoplasmic; the sequence is RITIRVWAKRPPGEAETNRDQRMARSKRKMVKMM. Residues 330–350 traverse the membrane as a helical segment; the sequence is LTVVIVFTCCWLPFNILQLLL. Over 351–363 the chain is Extracellular; that stretch reads NDEEFAHWDPLPY. A helical transmembrane segment spans residues 364-384; sequence VWFAFHWLAMSHCCYNPIIYC. Residues 385 to 464 lie on the Cytoplasmic side of the membrane; that stretch reads YMNARFRSGF…LSCGETSPLR (80 aa).

Belongs to the G-protein coupled receptor 1 family.

The protein localises to the cell membrane. In terms of biological role, receptor for the neuropeptides RYamide-1 and RYamide-2. The activity of this receptor is mediated by G proteins which activate a phosphatidyl-inositol-calcium second messenger system. RYamide signaling may suppress feeding behavior. The sequence is that of RYamide receptor from Drosophila melanogaster (Fruit fly).